Consider the following 695-residue polypeptide: Probable pre-mRNA-splicing factor ATP-dependent RNA helicase DEAH9 (695 aa).

A Helicase ATP-binding domain is found at 58–223; sequence LYLVENHATT…FNSSKKRHAP (166 aa). Residue 71–78 participates in ATP binding; sequence GETGSGKT. A DEAH box motif is present at residues 170–173; it reads DEAH. Residues 261–438 form the Helicase C-terminal domain; it reads SVVSTILLIN…STVIQLKALG (178 aa).

The protein belongs to the DEAD box helicase family. DEAH subfamily. DDX35 sub-subfamily.

The catalysed reaction is ATP + H2O = ADP + phosphate + H(+). Functionally, may be involved in pre-mRNA splicing. The protein is Probable pre-mRNA-splicing factor ATP-dependent RNA helicase DEAH9 of Arabidopsis thaliana (Mouse-ear cress).